Reading from the N-terminus, the 206-residue chain is Type III pantothenate kinase (206 aa).

Residue 5-12 (DIGNSTAK) coordinates ATP. Substrate contacts are provided by residues Tyr-67 and 72 to 75 (GVDR). Asp-74 acts as the Proton acceptor in catalysis. Position 89 (Asp-89) interacts with K(+). Ser-92 serves as a coordination point for ATP. Thr-144 lines the substrate pocket.

Belongs to the type III pantothenate kinase family. In terms of assembly, homodimer. Requires NH4(+) as cofactor. K(+) is required as a cofactor.

The protein localises to the cytoplasm. The catalysed reaction is (R)-pantothenate + ATP = (R)-4'-phosphopantothenate + ADP + H(+). Its pathway is cofactor biosynthesis; coenzyme A biosynthesis; CoA from (R)-pantothenate: step 1/5. Catalyzes the phosphorylation of pantothenate (Pan), the first step in CoA biosynthesis. The polypeptide is Type III pantothenate kinase (Campylobacter hominis (strain ATCC BAA-381 / DSM 21671 / CCUG 45161 / LMG 19568 / NCTC 13146 / CH001A)).